The primary structure comprises 1411 residues: Early endosome antigen 1 (1411 aa).

The tract at residues 1–27 is disordered; the sequence is MFRRILQRTPGRVGSQGSDLDSSATPI. A compositionally biased stretch (polar residues) spans 15-27; sequence SQGSDLDSSATPI. Residues 41–64 form a C2H2-type zinc finger; it reads FICPQCMKSLGSADELFKHYQAVH. Ser-52 and Ser-70 each carry phosphoserine. Positions 78–1348 form a coiled coil; it reads LALTRDDITL…IKHTQALNRK (1271 aa). 2 disordered regions span residues 476 to 501 and 1189 to 1217; these read STELQHQLEKSKQQHQEQQALQQSAT and EKESQQLMREQVKKEEEKRKEEFSEKEAK. Basic and acidic residues predominate over residues 481–490; that stretch reads HQLEKSKQQH. Over residues 491 to 500 the composition is skewed to low complexity; sequence QEQQALQQSA. An FYVE-type zinc finger spans residues 1352–1410; sequence DNEVQNCMSCGKCFSVTVRRHHCRQCGNIFCAECSTKNALTPSSKKPVRVCDACFNDLQ. Zn(2+)-binding residues include Cys-1358, Cys-1361, Cys-1374, Cys-1377, Cys-1382, Cys-1385, Cys-1402, and Cys-1405.

As to quaternary structure, homodimer. Binds STX6. Binds RAB5A, RAB5B, RAB5C and RAB22A that have been activated by GTP-binding. Interacts with ERBB2. Interacts with RAB31. Interacts with SAMD9 and SAMD9L. May interact with PLEKHF2.

The protein resides in the cytoplasm. The protein localises to the early endosome membrane. In terms of biological role, binds phospholipid vesicles containing phosphatidylinositol 3-phosphate and participates in endosomal trafficking. This Mus musculus (Mouse) protein is Early endosome antigen 1 (Eea1).